The chain runs to 828 residues: Periplasmic nitrate reductase (828 aa).

The segment at residues methionine 1–alanine 31 is a signal peptide (tat-type signal). The 4Fe-4S Mo/W bis-MGD-type domain maps to isoleucine 39 to aspartate 95. Residues cysteine 46, cysteine 49, cysteine 53, and cysteine 81 each coordinate [4Fe-4S] cluster. Mo-bis(molybdopterin guanine dinucleotide)-binding positions include lysine 83, glutamine 150, asparagine 175, cysteine 179, tryptophan 212 to methionine 219, serine 243 to histidine 247, glutamine 262 to aspartate 264, methionine 372, glutamine 376, asparagine 482, serine 508 to aspartate 509, lysine 531, aspartate 558, and threonine 718 to threonine 727. Phenylalanine 794 contacts substrate. 2 residues coordinate Mo-bis(molybdopterin guanine dinucleotide): asparagine 802 and lysine 819.

This sequence belongs to the prokaryotic molybdopterin-containing oxidoreductase family. NasA/NapA/NarB subfamily. Component of the periplasmic nitrate reductase NapAB complex composed of NapA and NapB. The cofactor is [4Fe-4S] cluster. It depends on Mo-bis(molybdopterin guanine dinucleotide) as a cofactor. Predicted to be exported by the Tat system. The position of the signal peptide cleavage has not been experimentally proven.

It is found in the periplasm. The enzyme catalyses 2 Fe(II)-[cytochrome] + nitrate + 2 H(+) = 2 Fe(III)-[cytochrome] + nitrite + H2O. Its function is as follows. Catalytic subunit of the periplasmic nitrate reductase complex NapAB. Receives electrons from NapB and catalyzes the reduction of nitrate to nitrite. The chain is Periplasmic nitrate reductase from Shigella dysenteriae serotype 1 (strain Sd197).